The primary structure comprises 294 residues: 4-hydroxy-tetrahydrodipicolinate synthase (294 aa).

Thr45 is a pyruvate binding site. The active-site Proton donor/acceptor is the Tyr133. Catalysis depends on Lys161, which acts as the Schiff-base intermediate with substrate. Ile203 is a binding site for pyruvate.

This sequence belongs to the DapA family. In terms of assembly, homotetramer; dimer of dimers.

The protein localises to the cytoplasm. The catalysed reaction is L-aspartate 4-semialdehyde + pyruvate = (2S,4S)-4-hydroxy-2,3,4,5-tetrahydrodipicolinate + H2O + H(+). The protein operates within amino-acid biosynthesis; L-lysine biosynthesis via DAP pathway; (S)-tetrahydrodipicolinate from L-aspartate: step 3/4. Functionally, catalyzes the condensation of (S)-aspartate-beta-semialdehyde [(S)-ASA] and pyruvate to 4-hydroxy-tetrahydrodipicolinate (HTPA). The polypeptide is 4-hydroxy-tetrahydrodipicolinate synthase (Buchnera aphidicola subsp. Baizongia pistaciae (strain Bp)).